The primary structure comprises 1162 residues: Enhanced level of genomic instability 1 (1162 aa).

Disordered regions lie at residues 1 to 136 (MTDV…ADNQ), 144 to 163 (KAGK…KPKP), 179 to 202 (LGVN…ATPT), 249 to 319 (KTDA…TKKR), 348 to 380 (METP…RRSC), 611 to 634 (RSME…PNGE), and 666 to 697 (WSGN…SSSN). Over residues 65 to 78 (KQKHREKHKRKREE) the composition is skewed to basic residues. Residues 79-111 (KRRAALMEDQKSTTEEVKANAKEKPQPLREKSS) show a composition bias toward basic and acidic residues. Residues 125 to 136 (PLKSSTPVADNQ) show a composition bias toward polar residues. Over residues 268-278 (KRLRGRPRSRR) the composition is skewed to basic residues. Low complexity-rich tracts occupy residues 666-676 (WSGNGGSNRNS) and 684-697 (DMSN…SSSN). 703-710 (GPSSSGKT) lines the ATP pocket. 2 disordered regions span residues 900 to 923 (GDST…SRLA) and 975 to 1008 (QAAG…SDGH). Basic residues predominate over residues 984-993 (AAKRKSRSPK). Polar residues predominate over residues 998-1008 (SSATGQKSDGH).

This sequence belongs to the ELG1 family. Component of a heteropentameric Elg1 RFC-like complex composed of one large subunit (elg1) and four small subunits (RfC4, RfC38, CG8142 and RfC3). As part of the complex, might interact with the Enok complex, composed of enok, Br140, Eaf6 and Ing5. Within the Enok complex, interacts directly with Br140. As to expression, expressed at higher levels in the germline nurse cells than in the somatic follicle cells.

It localises to the nucleus. Has an important role in DNA replication and in maintaining genome integrity during replication stress. Promotes PCNA deubiquitination. As component of the Elg1 RFC-like complex, regulates the functions of the DNA polymerase processivity factor PCNA by unloading it from DNA after replication during the S phase of the cell cycle. The PCNA-unloading might be regulated via interaction with the Enok acetyltransferase complex. Might have a role in restarting of stalled/regressed replication forks during replication stress. In the ovaries, has a role in nurse cell endoreplication. This is Enhanced level of genomic instability 1 from Drosophila melanogaster (Fruit fly).